The primary structure comprises 172 residues: Translationally-controlled tumor protein (172 aa).

Residues 1 to 172 (MIIYRDLISH…FKDGLEMEKC (172 aa)) form the TCTP domain. At Ser-46 the chain carries Phosphoserine; by PLK1. Ser-53 carries the phosphoserine modification. Position 64 is a phosphoserine; by PLK1 (Ser-64). The tract at residues 70–172 (VDIVMNHHLQ…FKDGLEMEKC (103 aa)) is required for reduction of TSC22D1 protein stability.

It belongs to the TCTP family. In terms of assembly, homodimer. Interacts with STEAP3. Interacts with TSC22D1; interaction results in the destabilization of TSC22D1 protein. In terms of tissue distribution, found in several healthy and tumoral cells including erythrocytes, hepatocytes, macrophages, platelets, keratinocytes, erythroleukemia cells, gliomas, melanomas, hepatoblastomas, and lymphomas. It cannot be detected in kidney and renal cell carcinoma (RCC). Expressed in placenta and prostate.

The protein localises to the cytoplasm. Involved in calcium binding and microtubule stabilization. Acts as a negative regulator of TSC22D1-mediated apoptosis, via interaction with and destabilization of TSC22D1 protein. The sequence is that of Translationally-controlled tumor protein (TPT1) from Homo sapiens (Human).